A 318-amino-acid polypeptide reads, in one-letter code: MAEWVFKQGALSLAEMTNLPAGFRKRLAGEAVVGRLEVLDSRVSAAGDTVKYLLGLDDGHAVETVLMRHDYGRTVCVSSQVGCRMACRFCASALGGWIRNLRSGELYEQVLAVRRASGEPVTHVVLMGMGEPLDNYENTLKFVANVTAPYGLRLSQRRITLSTCGLVPEIQKLARERLALTLAISLHAPNNALRDTLVPVNRKYPLEQLIPACAEYARRTGRRVSFEYILLGGVNDSPELARELSDLLTGLLGHVNLIPANPVPESGYRAPSPEAVRTFRRVLEEGGVPVSLRRELGADIGAACGQLRRRHRTKAVEE.

Residue E63 is the Proton acceptor of the active site. The Radical SAM core domain maps to 69–299 (HDYGRTVCVS…VSLRRELGAD (231 aa)). A disulfide bond links C76 and C304. 3 residues coordinate [4Fe-4S] cluster: C83, C87, and C90. S-adenosyl-L-methionine is bound by residues 130–131 (GE), S162, 185–187 (SLH), and N261. Residue C304 is the S-methylcysteine intermediate of the active site.

Belongs to the radical SAM superfamily. RlmN family. [4Fe-4S] cluster serves as cofactor.

It localises to the cytoplasm. It catalyses the reaction adenosine(2503) in 23S rRNA + 2 reduced [2Fe-2S]-[ferredoxin] + 2 S-adenosyl-L-methionine = 2-methyladenosine(2503) in 23S rRNA + 5'-deoxyadenosine + L-methionine + 2 oxidized [2Fe-2S]-[ferredoxin] + S-adenosyl-L-homocysteine. The enzyme catalyses adenosine(37) in tRNA + 2 reduced [2Fe-2S]-[ferredoxin] + 2 S-adenosyl-L-methionine = 2-methyladenosine(37) in tRNA + 5'-deoxyadenosine + L-methionine + 2 oxidized [2Fe-2S]-[ferredoxin] + S-adenosyl-L-homocysteine. Its function is as follows. Specifically methylates position 2 of adenine 2503 in 23S rRNA and position 2 of adenine 37 in tRNAs. In Desulforudis audaxviator (strain MP104C), this protein is Probable dual-specificity RNA methyltransferase RlmN.